A 496-amino-acid polypeptide reads, in one-letter code: N-succinylglutamate 5-semialdehyde dehydrogenase (496 aa).

Residue 229-234 (GSYATG) coordinates NAD(+). Active-site residues include Glu252 and Cys286.

This sequence belongs to the aldehyde dehydrogenase family. AstD subfamily.

It carries out the reaction N-succinyl-L-glutamate 5-semialdehyde + NAD(+) + H2O = N-succinyl-L-glutamate + NADH + 2 H(+). It functions in the pathway amino-acid degradation; L-arginine degradation via AST pathway; L-glutamate and succinate from L-arginine: step 4/5. Functionally, catalyzes the NAD-dependent reduction of succinylglutamate semialdehyde into succinylglutamate. This Legionella pneumophila subsp. pneumophila (strain Philadelphia 1 / ATCC 33152 / DSM 7513) protein is N-succinylglutamate 5-semialdehyde dehydrogenase.